Reading from the N-terminus, the 378-residue chain is Succinyl-diaminopimelate desuccinylase (378 aa).

H67 contributes to the Zn(2+) binding site. D69 is an active-site residue. Residue D100 coordinates Zn(2+). The active-site Proton acceptor is E134. Zn(2+)-binding residues include E135, E163, and H349.

It belongs to the peptidase M20A family. DapE subfamily. In terms of assembly, homodimer. Zn(2+) is required as a cofactor. It depends on Co(2+) as a cofactor.

It catalyses the reaction N-succinyl-(2S,6S)-2,6-diaminopimelate + H2O = (2S,6S)-2,6-diaminopimelate + succinate. Its pathway is amino-acid biosynthesis; L-lysine biosynthesis via DAP pathway; LL-2,6-diaminopimelate from (S)-tetrahydrodipicolinate (succinylase route): step 3/3. Functionally, catalyzes the hydrolysis of N-succinyl-L,L-diaminopimelic acid (SDAP), forming succinate and LL-2,6-diaminopimelate (DAP), an intermediate involved in the bacterial biosynthesis of lysine and meso-diaminopimelic acid, an essential component of bacterial cell walls. This Nitrosomonas eutropha (strain DSM 101675 / C91 / Nm57) protein is Succinyl-diaminopimelate desuccinylase.